Consider the following 147-residue polypeptide: Large ribosomal subunit protein uL15 (147 aa).

The tract at residues 1 to 62 (MDLSNLRPAI…GQMPLQRRLP (62 aa)) is disordered. 2 stretches are compositionally biased toward gly residues: residues 21–31 (RGPGSGNGKTA) and 42–52 (SGGGVKPGFEG).

The protein belongs to the universal ribosomal protein uL15 family. Part of the 50S ribosomal subunit.

Binds to the 23S rRNA. The chain is Large ribosomal subunit protein uL15 from Syntrophotalea carbinolica (strain DSM 2380 / NBRC 103641 / GraBd1) (Pelobacter carbinolicus).